The following is a 99-amino-acid chain: uncharacterized protein (99 aa).

Belongs to the HesB/IscA family.

This is an uncharacterized protein from Staphylococcus haemolyticus (strain JCSC1435).